Here is a 136-residue protein sequence, read N- to C-terminus: Probable intron-encoded DNA endonuclease 3 (136 aa).

It belongs to the LAGLIDADG endonuclease family.

The protein resides in the mitochondrion. Functionally, mitochondrial DNA endonuclease involved in intron homing. This Mycosarcoma maydis (Corn smut fungus) protein is Probable intron-encoded DNA endonuclease 3 (hegI3).